Here is a 118-residue protein sequence, read N- to C-terminus: Acidic phospholipase A2 CM-I (118 aa).

Intrachain disulfides connect Cys11/Cys70, Cys26/Cys117, Cys28/Cys44, Cys43/Cys98, Cys50/Cys91, Cys59/Cys84, and Cys77/Cys89. Residues Tyr27, Gly29, and Gly31 each contribute to the Ca(2+) site. His47 is a catalytic residue. Residue Asp48 participates in Ca(2+) binding. Asp92 is an active-site residue.

Belongs to the phospholipase A2 family. Group I subfamily. D49 sub-subfamily. Ca(2+) is required as a cofactor. Expressed by the venom gland.

It is found in the secreted. It catalyses the reaction a 1,2-diacyl-sn-glycero-3-phosphocholine + H2O = a 1-acyl-sn-glycero-3-phosphocholine + a fatty acid + H(+). Its function is as follows. Snake venom phospholipase A2 (PLA2) that causes myonecrosis when injected intramuscularly, shows indirect hemolytic activity, abolishes twitches evoked by indirect stimulation earlier than those by direct stimulation (in the mouse phrenic nerve-diaphragm preparation) but does not produce complete neuromuscular block (up to 30 ug/ml) (in the chick biventer cervicis nerve-muscle preparation). PLA2 catalyzes the calcium-dependent hydrolysis of the 2-acyl groups in 3-sn-phosphoglycerides. This chain is Acidic phospholipase A2 CM-I, found in Naja mossambica (Mozambique spitting cobra).